Here is a 267-residue protein sequence, read N- to C-terminus: tRNA pseudouridine synthase A (267 aa).

Catalysis depends on Asp-51, which acts as the Nucleophile. Tyr-109 is a substrate binding site.

The protein belongs to the tRNA pseudouridine synthase TruA family. In terms of assembly, homodimer.

The catalysed reaction is uridine(38/39/40) in tRNA = pseudouridine(38/39/40) in tRNA. Functionally, formation of pseudouridine at positions 38, 39 and 40 in the anticodon stem and loop of transfer RNAs. The polypeptide is tRNA pseudouridine synthase A (Staphylococcus epidermidis (strain ATCC 12228 / FDA PCI 1200)).